We begin with the raw amino-acid sequence, 103 residues long: Co-chaperonin GroES (103 aa).

The protein belongs to the GroES chaperonin family. As to quaternary structure, heptamer of 7 subunits arranged in a ring. Interacts with the chaperonin GroEL.

It is found in the cytoplasm. Its function is as follows. Together with the chaperonin GroEL, plays an essential role in assisting protein folding. The GroEL-GroES system forms a nano-cage that allows encapsulation of the non-native substrate proteins and provides a physical environment optimized to promote and accelerate protein folding. GroES binds to the apical surface of the GroEL ring, thereby capping the opening of the GroEL channel. The sequence is that of Co-chaperonin GroES from Nostoc sp. (strain PCC 7120 / SAG 25.82 / UTEX 2576).